A 229-amino-acid polypeptide reads, in one-letter code: Cytidylate kinase (229 aa).

12–20 (GPSGVGKST) contacts ATP.

It belongs to the cytidylate kinase family. Type 1 subfamily.

Its subcellular location is the cytoplasm. The catalysed reaction is CMP + ATP = CDP + ADP. The enzyme catalyses dCMP + ATP = dCDP + ADP. The polypeptide is Cytidylate kinase (Mesomycoplasma hyopneumoniae (strain 7448) (Mycoplasma hyopneumoniae)).